A 467-amino-acid chain; its full sequence is MAP kinase-interacting serine/threonine-protein kinase 2 (467 aa).

One can recognise a Protein kinase domain in the interval 83 to 367; the sequence is QLQQEILGEG…AAQVLQHPWV (285 aa). ATP contacts are provided by residues 89-97 and Lys-112; that span reads LGEGAYAKV. Catalysis depends on Asp-204, which acts as the Proton acceptor. 3 residues coordinate Zn(2+): Cys-298, Cys-310, and Cys-313. The tract at residues 432–467 is disordered; sequence MQLSPPSESKLAKRRQQGSKGGISPPSLAPLLIVSD.

This sequence belongs to the protein kinase superfamily. CAMK Ser/Thr protein kinase family. Mg(2+) is required as a cofactor. The cofactor is Zn(2+).

It carries out the reaction L-seryl-[protein] + ATP = O-phospho-L-seryl-[protein] + ADP + H(+). The enzyme catalyses L-threonyl-[protein] + ATP = O-phospho-L-threonyl-[protein] + ADP + H(+). May play a role in the response to environmental stress and cytokines. Appears to regulate translation by phosphorylating EIF4E, thus increasing the affinity of this protein for the 7-methylguanosine-containing mRNA cap. This is MAP kinase-interacting serine/threonine-protein kinase 2 (mknk2) from Xenopus laevis (African clawed frog).